The primary structure comprises 393 residues: Short-chain dehydrogenase/reductase family 42E member 1 (393 aa).

Tyr152 serves as the catalytic Proton acceptor. Lys156 contacts NAD(+). 2 consecutive transmembrane segments (helical) span residues 282 to 302 (LPLT…FILG) and 371 to 391 (GLLV…SVIL).

It belongs to the 3-beta-HSD family.

The protein localises to the membrane. This is Short-chain dehydrogenase/reductase family 42E member 1 (SDR42E1) from Homo sapiens (Human).